Consider the following 640-residue polypeptide: MQPRGERPAGRTQSPEHSSPGPGPEAPPPPQPPAPEAERARPRQARPAAPMEGAMQLLSREGHSVAHNSKRHYHDAFVAMSRMRQRGLLCDIVLHVAAKEIRAHKVVLASCSPYFHAMFTNEMSESRQTHVTLHDIDPQALDQLVQFAYTAEIVVGEGNVQTLLPAASLLQLNGVRDACCKFLLSQLDPSNCLGIRGFADTHSCSDLLKAAHRYVLQHFVDVAKTEEFMLLPLKQVLELVSSDSLNVPSEEDVYRAVLSWVKHDVDTRRQHVPRLMKCVRLPLLSRDFLLGHVDAESLVRHHPDCKDLLIEALKFHLLPEQRGVLGTSRTRPRRCEGAGPVLFAVGGGSLFAIHGDCEAYDTRTDRWHVVASMSTRRARVGVAAVGNRLYAVGGYDGTSDLATVESYDPVTNTWQPEVSMGTRRSCLGVAALHGLLYAAGGYDGASCLNSAERYDPLTGTWTSIAAMSTRRRYVRVATLDGNLYAVGGYDSSSHLATVEKYEPQVNSWTPVASMLSRRSSAGVAVLEGALYVAGGNDGTSCLNSVERYSTKAGAWESVAPMNIRRSTHDLVAMDGWLYAVGGNDGSSSLNSIEKYNPRTNKWVAASCMFTRRSSVGVAVLELLNFPPPSSPTLSVSSTSL.

Residues 1 to 50 (MQPRGERPAGRTQSPEHSSPGPGPEAPPPPQPPAPEAERARPRQARPAAP) are disordered. Over residues 21-35 (GPGPEAPPPPQPPAP) the composition is skewed to pro residues. The BTB domain maps to 90–157 (CDIVLHVAAK…AYTAEIVVGE (68 aa)). In terms of domain architecture, BACK spans 192-294 (CLGIRGFADT…SRDFLLGHVD (103 aa)). Residues 287 to 639 (DFLLGHVDAE…SPTLSVSSTS (353 aa)) form an interaction with F-actin region. 6 Kelch repeats span residues 341 to 387 (VLFA…AVGN), 388 to 434 (RLYA…ALHG), 436 to 481 (LYAA…TLDG), 482 to 528 (NLYA…VLEG), 530 to 575 (LYVA…AMDG), and 576 to 622 (WLYA…VLEL). The interaction with PDZK1 stretch occupies residues 638 to 640 (TSL).

In terms of assembly, interacts with F-actin; the interaction disrupts the F-actin structures and leads to marked changes of neuronal morphology. Component of a complex, composed of PDZK1, SYNGAP1, KLHL17 and NMDA receptors. Interacts directly with PDZK1 (via PDZ1 domain); the interaction is important for integrity of actin cytoskeleton structures in neurons. Interacts with DLG4 and SYNGAP1. Interacts (via kelch repeats) with GRIK2 (via C-terminus); the interaction targets GRIK2 for degradation via ubiquitin-proteasome pathway. Interacts with GRIK1. Interacts with (via BTB domain) CUL3; the interaction regulates surface GRIK2 expression.

The protein resides in the postsynaptic density. The protein localises to the synapse. It participates in protein modification; protein ubiquitination. Substrate-recognition component of some cullin-RING-based BCR (BTB-CUL3-RBX1) E3 ubiquitin-protein ligase complexes. The BCR(KLHL17) complex mediates the ubiquitination and subsequent degradation of GLUR6. May play a role in the actin-based neuronal function. This is Kelch-like protein 17 (Klhl17) from Mus musculus (Mouse).